The chain runs to 150 residues: Phosphopantetheine adenylyltransferase (150 aa).

Threonine 9 lines the substrate pocket. ATP contacts are provided by residues 9-10 (TF) and histidine 17. Substrate-binding residues include lysine 41, threonine 73, and arginine 87. ATP is bound by residues 88–90 (GIR), glutamate 98, and 122–128 (LTCVSST).

It belongs to the bacterial CoaD family. Homohexamer. Mg(2+) is required as a cofactor.

Its subcellular location is the cytoplasm. The catalysed reaction is (R)-4'-phosphopantetheine + ATP + H(+) = 3'-dephospho-CoA + diphosphate. It participates in cofactor biosynthesis; coenzyme A biosynthesis; CoA from (R)-pantothenate: step 4/5. In terms of biological role, reversibly transfers an adenylyl group from ATP to 4'-phosphopantetheine, yielding dephospho-CoA (dPCoA) and pyrophosphate. This chain is Phosphopantetheine adenylyltransferase, found in Bacteroides fragilis (strain ATCC 25285 / DSM 2151 / CCUG 4856 / JCM 11019 / LMG 10263 / NCTC 9343 / Onslow / VPI 2553 / EN-2).